A 330-amino-acid polypeptide reads, in one-letter code: Ribosomal RNA small subunit methyltransferase C (330 aa).

The protein belongs to the methyltransferase superfamily. RsmC family. As to quaternary structure, monomer.

It localises to the cytoplasm. It carries out the reaction guanosine(1207) in 16S rRNA + S-adenosyl-L-methionine = N(2)-methylguanosine(1207) in 16S rRNA + S-adenosyl-L-homocysteine + H(+). In terms of biological role, specifically methylates the guanine in position 1207 of 16S rRNA in the 30S particle. The chain is Ribosomal RNA small subunit methyltransferase C from Haemophilus influenzae (strain PittGG).